A 631-amino-acid polypeptide reads, in one-letter code: Mercuric reductase (631 aa).

HMA domains follow at residues Lys2 to Gly66 and Lys81 to Gly145. Residues Cys13, Cys16, Cys92, and Cys95 each coordinate a metal cation. FAD-binding residues include Ala181, Gly201, and Thr206. A disulfide bridge connects residues Cys207 and Cys212. Positions 216, 472, and 480 each coordinate FAD. Positions 628 and 629 each coordinate Hg(2+).

The protein belongs to the class-I pyridine nucleotide-disulfide oxidoreductase family. In terms of assembly, homodimer. It depends on FAD as a cofactor.

The enzyme catalyses Hg + NADP(+) + H(+) = Hg(2+) + NADPH. Resistance to Hg(2+) in bacteria appears to be governed by a specialized system which includes mercuric reductase. MerA protein is responsible for volatilizing mercury as Hg(0). The sequence is that of Mercuric reductase (merA) from Bacillus cereus.